Reading from the N-terminus, the 127-residue chain is Holo-[acyl-carrier-protein] synthase (127 aa).

Mg(2+)-binding residues include aspartate 9 and glutamate 58.

Belongs to the P-Pant transferase superfamily. AcpS family. The cofactor is Mg(2+).

It localises to the cytoplasm. It carries out the reaction apo-[ACP] + CoA = holo-[ACP] + adenosine 3',5'-bisphosphate + H(+). Its function is as follows. Transfers the 4'-phosphopantetheine moiety from coenzyme A to a Ser of acyl-carrier-protein. In Shewanella baltica (strain OS223), this protein is Holo-[acyl-carrier-protein] synthase.